The primary structure comprises 510 residues: GMP synthase [glutamine-hydrolyzing] (510 aa).

Residues 5-195 (LVLVVDFGGQ…LFNVCNLKGD (191 aa)) enclose the Glutamine amidotransferase type-1 domain. Catalysis depends on C82, which acts as the Nucleophile. Residues H169 and E171 contribute to the active site. A GMPS ATP-PPase domain is found at 196 to 385 (WSMSSFAEQQ…LGIPHKLVWR (190 aa)). 223–229 (SGGVDSS) provides a ligand contact to ATP.

As to quaternary structure, homodimer.

It catalyses the reaction XMP + L-glutamine + ATP + H2O = GMP + L-glutamate + AMP + diphosphate + 2 H(+). It participates in purine metabolism; GMP biosynthesis; GMP from XMP (L-Gln route): step 1/1. Its function is as follows. Catalyzes the synthesis of GMP from XMP. This Clostridium botulinum (strain Kyoto / Type A2) protein is GMP synthase [glutamine-hydrolyzing].